We begin with the raw amino-acid sequence, 727 residues long: Beta-galactosidase 2 (727 aa).

The signal sequence occupies residues 1–27 (MSMHFRNKAWIILAILCFSSLIHSTEA). Glu-185 acts as the Proton donor in catalysis. The Nucleophile role is filled by Glu-254. N-linked (GlcNAc...) asparagine glycosylation occurs at Asn-255.

The protein belongs to the glycosyl hydrolase 35 family. Ubiquitous, with higher expression levels in roots and siliques.

The protein localises to the secreted. The protein resides in the extracellular space. It is found in the apoplast. The enzyme catalyses Hydrolysis of terminal non-reducing beta-D-galactose residues in beta-D-galactosides.. This Arabidopsis thaliana (Mouse-ear cress) protein is Beta-galactosidase 2 (BGAL2).